A 503-amino-acid chain; its full sequence is Probable cytosol aminopeptidase (503 aa).

Lysine 270 and aspartate 275 together coordinate Mn(2+). Residue lysine 282 is part of the active site. Residues aspartate 293, aspartate 352, and glutamate 354 each coordinate Mn(2+). Arginine 356 is an active-site residue.

This sequence belongs to the peptidase M17 family. Requires Mn(2+) as cofactor.

Its subcellular location is the cytoplasm. The enzyme catalyses Release of an N-terminal amino acid, Xaa-|-Yaa-, in which Xaa is preferably Leu, but may be other amino acids including Pro although not Arg or Lys, and Yaa may be Pro. Amino acid amides and methyl esters are also readily hydrolyzed, but rates on arylamides are exceedingly low.. The catalysed reaction is Release of an N-terminal amino acid, preferentially leucine, but not glutamic or aspartic acids.. In terms of biological role, presumably involved in the processing and regular turnover of intracellular proteins. Catalyzes the removal of unsubstituted N-terminal amino acids from various peptides. This is Probable cytosol aminopeptidase from Edwardsiella ictaluri (strain 93-146).